A 454-amino-acid polypeptide reads, in one-letter code: Glutamine synthetase (454 aa).

The region spanning 25 to 111 (QGIDFLRLQF…LICDVVDREG (87 aa)) is the GS beta-grasp domain. A GS catalytic domain is found at 118-454 (PRQVLKNVLA…WETDRYLEKF (337 aa)). Residues glutamate 141 and glutamate 143 each coordinate Mg(2+). Glutamate 193 serves as a coordination point for ATP. Mg(2+) is bound by residues glutamate 198 and glutamate 205. L-glutamate-binding positions include 249-250 (NG) and glycine 250. Histidine 254 contributes to the Mg(2+) binding site. ATP contacts are provided by residues 256–258 (HIS) and serine 258. L-glutamate-binding residues include arginine 308, glutamate 314, and arginine 326. ATP-binding residues include arginine 326 and arginine 331. Glutamate 343 is a Mg(2+) binding site. Arginine 345 provides a ligand contact to L-glutamate.

Belongs to the glutamine synthetase family. Oligomer of 12 subunits arranged in the form of two hexagons. In its feedback-inhibited form, interacts with TnrA in order to block its DNA-binding activity. It depends on Mg(2+) as a cofactor.

Its subcellular location is the cytoplasm. The enzyme catalyses L-glutamate + NH4(+) + ATP = L-glutamine + ADP + phosphate + H(+). Inhibited by glutamine. Glutamine synthetase (GS) is an unusual multitasking protein that functions as an enzyme, a transcription coregulator, and a chaperone in ammonium assimilation and in the regulation of genes involved in nitrogen metabolism. It catalyzes the ATP-dependent biosynthesis of glutamine from glutamate and ammonia. Feedback-inhibited GlnA also interacts with and regulates the activity of the transcriptional regulator TnrA. During nitrogen limitation, TnrA is in its DNA-binding active state and turns on the transcription of genes required for nitrogen assimilation. Under conditions of nitrogen excess, feedback-inhibited GlnA forms a stable complex with TnrA, which inhibits its DNA-binding activity. In contrast, feedback-inhibited GlnA acts as a chaperone to stabilize the DNA-binding activity of GlnR, which represses the transcription of nitrogen assimilation genes. This chain is Glutamine synthetase, found in Halobacterium salinarum (strain ATCC 700922 / JCM 11081 / NRC-1) (Halobacterium halobium).